Here is a 58-residue protein sequence, read N- to C-terminus: UPF0509 protein YciZ (58 aa).

This sequence belongs to the UPF0509 family.

The polypeptide is UPF0509 protein YciZ (Escherichia fergusonii (strain ATCC 35469 / DSM 13698 / CCUG 18766 / IAM 14443 / JCM 21226 / LMG 7866 / NBRC 102419 / NCTC 12128 / CDC 0568-73)).